The primary structure comprises 678 residues: uncharacterized protein (678 aa).

Positions 1 to 26 (MGVHFDDNANTTWEATDPGVSSDCDG) are disordered. The next 9 helical transmembrane spans lie at 119–139 (LLLL…LIYP), 245–265 (SFPC…GGCT), 317–337 (AAVV…YDSI), 340–360 (YWIN…PPLL), 371–391 (ELFS…YVVW), 405–425 (IAKV…NVTF), 443–463 (GALT…VIQA), 475–495 (YFKI…LPGL), and 519–539 (AYLF…RWDF).

It is found in the vacuole membrane. This is an uncharacterized protein from Saccharomyces cerevisiae (strain ATCC 204508 / S288c) (Baker's yeast).